Reading from the N-terminus, the 53-residue chain is Serine rich endogenous peptide 3 (53 aa).

The first 26 residues, Met1 to Cys26, serve as a signal peptide directing secretion. Positions Ser37–Tyr53 match the SCOOP motif motif. Residues Ser49–Ser51 carry the SxS motif essential for MIK2 binding motif.

Belongs to the serine rich endogenous peptide (SCOOP) phytocytokine family. Interacts with MIK2 (via extracellular leucine-rich repeat domain); this interaction triggers the formation of complex between MIK2 and the BAK1/SERK3 and SERK4 coreceptors, and subsequent BAK1 activation by phosphorylation.

The protein localises to the cell membrane. It is found in the secreted. It localises to the extracellular space. The protein resides in the apoplast. Functionally, brassicaceae-specific phytocytokine (plant endogenous peptide released into the apoplast) perceived by MIK2 in a BAK1/SERK3 and SERK4 coreceptors-dependent manner, that modulates various physiological and antimicrobial processes including growth prevention and reactive oxygen species (ROS) response regulation. This chain is Serine rich endogenous peptide 3, found in Arabidopsis thaliana (Mouse-ear cress).